The sequence spans 355 residues: Peptide chain release factor 1 (355 aa).

At Q233 the chain carries N5-methylglutamine.

This sequence belongs to the prokaryotic/mitochondrial release factor family. Methylated by PrmC. Methylation increases the termination efficiency of RF1.

Its subcellular location is the cytoplasm. In terms of biological role, peptide chain release factor 1 directs the termination of translation in response to the peptide chain termination codons UAG and UAA. This chain is Peptide chain release factor 1, found in Dehalococcoides mccartyi (strain ATCC BAA-2100 / JCM 16839 / KCTC 5957 / BAV1).